Reading from the N-terminus, the 275-residue chain is 2,3,4,5-tetrahydropyridine-2,6-dicarboxylate N-succinyltransferase (275 aa).

Arginine 104 and aspartate 141 together coordinate substrate.

The protein belongs to the transferase hexapeptide repeat family. In terms of assembly, homotrimer.

The protein localises to the cytoplasm. It carries out the reaction (S)-2,3,4,5-tetrahydrodipicolinate + succinyl-CoA + H2O = (S)-2-succinylamino-6-oxoheptanedioate + CoA. It participates in amino-acid biosynthesis; L-lysine biosynthesis via DAP pathway; LL-2,6-diaminopimelate from (S)-tetrahydrodipicolinate (succinylase route): step 1/3. This is 2,3,4,5-tetrahydropyridine-2,6-dicarboxylate N-succinyltransferase from Mannheimia succiniciproducens (strain KCTC 0769BP / MBEL55E).